The following is a 432-amino-acid chain: Metacaspase-1 (432 aa).

The span at methionine 1–serine 11 shows a compositional bias: basic residues. Disordered stretches follow at residues methionine 1–arginine 21 and proline 41–proline 87. Positions serine 12–arginine 21 are enriched in low complexity. Over residues glycine 46–glutamine 74 the composition is skewed to pro residues. Active-site residues include histidine 223 and cysteine 279.

The protein belongs to the peptidase C14B family.

Involved in cell death (apoptosis). In Sclerotinia sclerotiorum (strain ATCC 18683 / 1980 / Ss-1) (White mold), this protein is Metacaspase-1 (casA).